Reading from the N-terminus, the 916-residue chain is Protein translocase subunit SecA (916 aa).

Residues Gln86, 104-108 (GEGKT), and Asp494 contribute to the ATP site. The disordered stretch occupies residues 859–916 (LEAPEKPAQLQYTAPSEGGGTQTRVETRSTGRSGNPAKAAEQDAAKDAAKRPAKKKRR). A compositionally biased stretch (polar residues) spans 880-891 (QTRVETRSTGRS). Positions 898–908 (AEQDAAKDAAK) are enriched in basic and acidic residues.

This sequence belongs to the SecA family. Monomer and homodimer. Part of the essential Sec protein translocation apparatus which comprises SecA, SecYEG and auxiliary proteins SecDF. Other proteins may also be involved.

It localises to the cell membrane. The protein resides in the cytoplasm. The catalysed reaction is ATP + H2O + cellular proteinSide 1 = ADP + phosphate + cellular proteinSide 2.. Its function is as follows. Part of the Sec protein translocase complex. Interacts with the SecYEG preprotein conducting channel. Has a central role in coupling the hydrolysis of ATP to the transfer of proteins into and across the cell membrane, serving as an ATP-driven molecular motor driving the stepwise translocation of polypeptide chains across the membrane. The chain is Protein translocase subunit SecA from Pseudarthrobacter chlorophenolicus (strain ATCC 700700 / DSM 12829 / CIP 107037 / JCM 12360 / KCTC 9906 / NCIMB 13794 / A6) (Arthrobacter chlorophenolicus).